A 588-amino-acid chain; its full sequence is Acid beta-fructofuranosidase 1, vacuolar (588 aa).

The Cytoplasmic portion of the chain corresponds to 1-31; sequence MDTSTSAYAPLPGEDPLFSGHPPASLRRSWK. Positions 1–115 are cleaved as a propeptide — removed in mature form; the sequence is MDTSTSAYAP…LSYNWTNAMF (115 aa). The helical; Signal-anchor for type II membrane protein transmembrane segment at 32–52 threads the bilayer; that stretch reads GFAVIFASVLFLLSLVGLIIH. At 53 to 588 the chain is on the lumenal side; that stretch reads QGPQQPPDVM…LRALRKEVGR (536 aa). The tract at residues 57–86 is disordered; sequence QPPDVMPDKQDEHHHPQSTTPASETTASWE. The segment covering 62 to 71 has biased composition (basic and acidic residues); the sequence is MPDKQDEHHH. The segment covering 73 to 84 has biased composition (polar residues); it reads QSTTPASETTAS. Substrate is bound by residues 130-133, Gln149, and Trp157; that span reads WMND. Asp133 is an active-site residue. Residue Asn159 is glycosylated (N-linked (GlcNAc...) asparagine). 192-193 serves as a coordination point for substrate; it reads WS. Asn226 carries an N-linked (GlcNAc...) asparagine glycan. Substrate contacts are provided by residues 256 to 257, Glu311, and Asp344; that span reads RD. Cysteines 499 and 545 form a disulfide.

The protein belongs to the glycosyl hydrolase 32 family. Monomer. May be present in two forms, a 70 kDa monomer and a heterodimer of the 30 kDa and 38 kDa subunits. The ratio of the levels of the two forms within cells appears to be regulated developmentally. Post-translationally, glycosylated. Expressed in buds, stems, roots and leaves. Expressed in the epidermal cells of young leaves and of primordial leaves.

The protein localises to the membrane. It localises to the vacuole lumen. The enzyme catalyses Hydrolysis of terminal non-reducing beta-D-fructofuranoside residues in beta-D-fructofuranosides.. Its function is as follows. Acidic vacuolar invertase involved in light-induced bud burst. The polypeptide is Acid beta-fructofuranosidase 1, vacuolar (Rosa hybrid cultivar).